We begin with the raw amino-acid sequence, 355 residues long: Cyanide hydratase (355 aa).

The 281-residue stretch at 6–286 (YKAAAVTSEP…GLLFVDIDLN (281 aa)) folds into the CN hydrolase domain. Residue E46 is the Proton acceptor of the active site. The active site involves K128. C163 serves as the catalytic Nucleophile.

The protein belongs to the carbon-nitrogen hydrolase superfamily. Nitrilase family. As to quaternary structure, oligomer of dimers, forming left-handed helical fibers.

It carries out the reaction formamide = hydrogen cyanide + H2O. In terms of biological role, catalyzes the hydration of cyanide to formamide. Degradation of cyanide may be important for plant pathogenic fungi in infection of cyanogenic plants. Also has low but significant nitrilase activity with acetonitrile, propionitrile and benzonitrile. The chain is Cyanide hydratase from Gibberella baccata (Fusarium lateritium).